The primary structure comprises 240 residues: Adenosylcobinamide-GDP ribazoletransferase (240 aa).

5 helical membrane-spanning segments follow: residues 31–51 (LLYY…ASHL), 62–81 (ALLL…DGLA), 109–129 (IAVV…WVLV), 133–153 (IGAQ…GLFL), and 179–199 (VLLV…LLAL).

The protein belongs to the CobS family. Mg(2+) is required as a cofactor.

It is found in the cell inner membrane. It catalyses the reaction alpha-ribazole + adenosylcob(III)inamide-GDP = adenosylcob(III)alamin + GMP + H(+). The catalysed reaction is alpha-ribazole 5'-phosphate + adenosylcob(III)inamide-GDP = adenosylcob(III)alamin 5'-phosphate + GMP + H(+). Its pathway is cofactor biosynthesis; adenosylcobalamin biosynthesis; adenosylcobalamin from cob(II)yrinate a,c-diamide: step 7/7. Functionally, joins adenosylcobinamide-GDP and alpha-ribazole to generate adenosylcobalamin (Ado-cobalamin). Also synthesizes adenosylcobalamin 5'-phosphate from adenosylcobinamide-GDP and alpha-ribazole 5'-phosphate. The chain is Adenosylcobinamide-GDP ribazoletransferase from Pseudomonas putida (strain ATCC 47054 / DSM 6125 / CFBP 8728 / NCIMB 11950 / KT2440).